Reading from the N-terminus, the 272-residue chain is Plastid division protein PDV1 (272 aa).

At Met1–Lys206 the chain is on the cytoplasmic side. A disordered region spans residues Lys40–Pro61. A coiled-coil region spans residues Ile78–His102. Residues Gly207 to Leu225 traverse the membrane as a helical segment. Over His226–Gly272 the chain is Chloroplast intermembrane.

As to quaternary structure, interacts (via C-terminus) with CDP1/PARC6 (via C-terminus). Interacts with ARC5/DRP5B. In terms of tissue distribution, expressed in young developing leaves, root tips, shoot apices, and flower buds (sepals, petals, stamens, and pistils), but not in developed tissues.

The protein localises to the plastid. The protein resides in the chloroplast outer membrane. Functionally, component of the plastid division machinery. Required to mediate the dissociation of ARC5/DRP5B from plastid outer envelope membranes (OEMs) at the midplastid constriction site in the cytoplasm, thus triggering ARC5/DRP5B ring turnover at the chloroplast division site. Binding to phosphatidylinositol 4-phosphate (PI4P) modulates negatively chloroplast division. The polypeptide is Plastid division protein PDV1 (Arabidopsis thaliana (Mouse-ear cress)).